Reading from the N-terminus, the 254-residue chain is 2,3-bisphosphoglycerate-dependent phosphoglycerate mutase (254 aa).

Residues 15 to 22, 28 to 29, R67, 94 to 97, K105, 121 to 122, and 188 to 189 each bind substrate; these read RHGQSEWN, TG, ERHY, RR, and GN. Residue H16 is the Tele-phosphohistidine intermediate of the active site. E94 (proton donor/acceptor) is an active-site residue.

This sequence belongs to the phosphoglycerate mutase family. BPG-dependent PGAM subfamily.

The enzyme catalyses (2R)-2-phosphoglycerate = (2R)-3-phosphoglycerate. The protein operates within carbohydrate degradation; glycolysis; pyruvate from D-glyceraldehyde 3-phosphate: step 3/5. In terms of biological role, catalyzes the interconversion of 2-phosphoglycerate and 3-phosphoglycerate. This chain is 2,3-bisphosphoglycerate-dependent phosphoglycerate mutase, found in Corynebacterium jeikeium (strain K411).